Here is a 409-residue protein sequence, read N- to C-terminus: MGSSSLSEDYRLCLERELRRGRAGVCGDPSLRAVLWHILVEDFDLHGALQDDALALLTDGLWGRADLAPALRGLARAFELLELAAVHLYLLPWRKEFTTIKTFSGGYVHVLKGALSEDLLIQSFQKMGYVRRDAHRLMVAALPPARQLVQVALGCFALRLECEILGEVLAQLGTSVLPAEELLQARRASVDVASCVAWLQQRLAREEEPPPLPRRGSPTGCQARLDLYRDVQEDEGSDEASLYGGPSPGPDSPTSELACQPRFWEQSARLWGAGGGPWEPAEVSSPTSGASEEEEPQPEAFSFLSLRRELLSRPGDLAPPHAPRSPEQASPPPIPEPPGYQMHTCLAPGALPALCCDTCRQLHAAHCAALPSCHPGHSLRTLRGNSQRRLWLQRAQVDALLYDSPAAGP.

3 disordered regions span residues 233–257 (EDEG…TSEL), 270–299 (LWGA…PQPE), and 313–337 (RPGD…IPEP).

This sequence belongs to the SPATA2 family.

This Bos taurus (Bovine) protein is Spermatogenesis-associated protein 2-like protein (SPATA2L).